We begin with the raw amino-acid sequence, 425 residues long: uncharacterized protein (425 aa).

The next 12 helical transmembrane spans lie at 15 to 35 (LICA…SQML), 48 to 68 (LIGA…WAPL), 84 to 104 (MLLS…FDPL), 107 to 127 (LGTV…QDIV), 149 to 169 (INAY…LAAI), 174 to 194 (TVFL…LFLA), 225 to 245 (VIQA…DSFA), 271 to 291 (ALWS…KLGI), 295 to 315 (LWLF…LAAF), 331 to 351 (VVIA…VAFM), 370 to 390 (LSAL…GAVG), and 395 to 415 (FWFC…VAPL).

This sequence to E.coli AmpG and yeast YBR220c.

It localises to the cell inner membrane. This is an uncharacterized protein from Haemophilus influenzae (strain ATCC 51907 / DSM 11121 / KW20 / Rd).